A 71-amino-acid chain; its full sequence is Sec-independent protein translocase protein TatA (71 aa).

A helical transmembrane segment spans residues 9-29 (LLLILAIVVILFGASRLPALG). The interval 43 to 71 (FGGEDEKPTASGNGSTPTQSSSDQGSKQA) is disordered. The span at 52–71 (ASGNGSTPTQSSSDQGSKQA) shows a compositional bias: polar residues.

This sequence belongs to the TatA/E family. The Tat system comprises two distinct complexes: a TatABC complex, containing multiple copies of TatA, TatB and TatC subunits, and a separate TatA complex, containing only TatA subunits. Substrates initially bind to the TatABC complex, which probably triggers association of the separate TatA complex to form the active translocon.

Its subcellular location is the cell inner membrane. In terms of biological role, part of the twin-arginine translocation (Tat) system that transports large folded proteins containing a characteristic twin-arginine motif in their signal peptide across membranes. TatA could form the protein-conducting channel of the Tat system. This chain is Sec-independent protein translocase protein TatA, found in Anaeromyxobacter dehalogenans (strain 2CP-C).